Reading from the N-terminus, the 372-residue chain is Germination protease (372 aa).

The propeptide occupies 1-15 (MNRSIDLSMYSVRTD).

This sequence belongs to the peptidase A25 family. In terms of assembly, homotetramer. Post-translationally, autoproteolytically processed. The inactive tetrameric zymogen termed p46 autoprocesses to a smaller form termed p41, which is active only during spore germination.

It catalyses the reaction Endopeptidase action with P4 Glu or Asp, P1 preferably Glu &gt; Asp, P1' hydrophobic and P2' Ala.. In terms of biological role, initiates the rapid degradation of small, acid-soluble proteins during spore germination. In Geobacillus sp. (strain WCH70), this protein is Germination protease.